The sequence spans 696 residues: MRLTTLWQNRSPGDRHLSTYFCFAAVRLLLVFVPQLGYVHPDEFFQSVEVMTGDHFRLEHTRTWEFNNSLPVRSIVLPFALLRIPWSFYEFVAECLKAWWQLELLGTYAYVVFPRLIYTLISFSNDYCLFRICRLYGLRFEIRLLAMGSSWILLVFGTRTFSNSLEMAMCSWLLCLVSECMLRTNTVVYKKEFLEEKYDKAESISERVRIWKLKNSLPAHNLQHLMAMSTICVAGVFNRPTFLLFGAPMVFFWLLRGMGTRSITFRDFNLRIALFCLCALPALVLFIFCDSLYYQHLTLGELHMMHLSIDNFVFTPWNFIKANLDSAQTASHGVHPCYVHLMVNMPMLFNVLALASLGAFAQLLLRFFRAEYQVLPRFQSIVSLMSGAIFVPLFFLSLINHQEPRFLLPVTFPLILLHAPKLITGFSAKYPFQKDHPLLRLFYDKLLSSKASGPYLLKIWYVSNVALTLFFGFIHQAGVYPLAADISHVIATKPAATHVHLITSHIYSLPLHLINIPSSRVLHFNRLTHQRYRRPRDFYMYEYGGLPLDSLLQKVKLISGSCEVKKSGPSRRRYKLYLAIPASLSADLHEALVHSNASSYLNFELLKVFYPHLSTEAFPHLQGRHPCDVDAPHWAHDDLRGTCSAEQLPAFSFAYLNKQFSSFVHQLGLALYEIDVTRNKPRSVVIKKASMTETAA.

6 helical membrane passes run 100–120 (WQLE…IYTL), 125–142 (NDYC…RFEI), 149–169 (SSWI…EMAM), 185–205 (NTVV…ESIS), 227–247 (AMST…LFGA), and 338–358 (YVHL…ASLG).

It belongs to the glycosyltransferase 22 family. PIGZ subfamily.

The protein localises to the endoplasmic reticulum membrane. It functions in the pathway glycolipid biosynthesis; glycosylphosphatidylinositol-anchor biosynthesis. Functionally, mannosyltransferase involved in glycosylphosphatidylinositol-anchor biosynthesis. Transfers a fourth mannose to some trimannosyl-GPIs during GPI precursor assembly. The protein is GPI mannosyltransferase 4 of Drosophila melanogaster (Fruit fly).